Reading from the N-terminus, the 163-residue chain is Nucleotide-binding protein NTHI1194 (163 aa).

This sequence belongs to the YajQ family.

In terms of biological role, nucleotide-binding protein. The polypeptide is Nucleotide-binding protein NTHI1194 (Haemophilus influenzae (strain 86-028NP)).